Reading from the N-terminus, the 640-residue chain is GATA zinc finger domain-containing protein 12 (640 aa).

2 disordered regions span residues 121-209 (SNNI…NIPI) and 355-390 (QQIRLQQQQSQQQHQQHQQHQQHQQPPTNIPQHINN). Composition is skewed to low complexity over residues 122 to 209 (NNIP…NIPI) and 355 to 379 (QQIRLQQQQSQQQHQQHQQHQQHQQ). The segment covering 380–390 (PPTNIPQHINN) has biased composition (polar residues). A GATA-type zinc finger spans residues 506–531 (CVNCKTSDTPEWRRGPQGAKTLCNAC).

The polypeptide is GATA zinc finger domain-containing protein 12 (gtaL) (Dictyostelium discoideum (Social amoeba)).